A 592-amino-acid chain; its full sequence is Alanine aminotransferase, mitochondrial (592 aa).

The N-terminal 64 residues, 1–64 (MLSLSAKNHF…RKVRPVLQRH (64 aa)), are a transit peptide targeting the mitochondrion. S77 is subject to Phosphoserine. Positions 258, 259, 284, 340, and 409 each coordinate pyridoxal 5'-phosphate. At K412 the chain carries N6-(pyridoxal phosphate)lysine. R421 contacts pyridoxal 5'-phosphate.

This sequence belongs to the class-I pyridoxal-phosphate-dependent aminotransferase family. Alanine aminotransferase subfamily. In terms of assembly, homodimer. Requires pyridoxal 5'-phosphate as cofactor.

It localises to the mitochondrion matrix. The catalysed reaction is L-alanine + 2-oxoglutarate = pyruvate + L-glutamate. It functions in the pathway amino-acid degradation; L-alanine degradation via transaminase pathway; pyruvate from L-alanine: step 1/1. Its function is as follows. Alanine aminotransferase involved in both alanine biosynthesis and utilization. Under respiratory conditions, constitutes the sole pathway for alanine biosynthesis and catabolism. Under fermentative conditions, it plays a catabolic role and alanine is mainly synthesized through an alternative pathway. The protein is Alanine aminotransferase, mitochondrial (ALT1) of Saccharomyces cerevisiae (strain ATCC 204508 / S288c) (Baker's yeast).